Consider the following 484-residue polypeptide: Endoglucanase 9 (484 aa).

An N-terminal signal peptide occupies residues 1–21 (MTSLFFFVLLFSSLLISNGDA). Residue Asp77 is the Nucleophile of the active site. Catalysis depends on residues His402, Asp453, and Glu462.

Belongs to the glycosyl hydrolase 9 (cellulase E) family. In terms of tissue distribution, specifically expressed in root cap cells.

It localises to the secreted. The protein resides in the cell wall. The catalysed reaction is Endohydrolysis of (1-&gt;4)-beta-D-glucosidic linkages in cellulose, lichenin and cereal beta-D-glucans.. This is Endoglucanase 9 (CEL3) from Arabidopsis thaliana (Mouse-ear cress).